The following is a 543-amino-acid chain: Oxalate--CoA ligase (543 aa).

196–207 (HTSGTTSTPKTV) lines the ATP pocket. An FACS motif is present at residues 410 to 458 (ENYFRTGDQGYFDPEGFLVLTGRIKELINRGGEKISPIELDGIMLSHPK). Residues 541 to 543 (SKL) carry the C-terminal peroxisome targeting signal (PTS1) motif.

This sequence belongs to the ATP-dependent AMP-binding enzyme family. As to quaternary structure, interacts with PEX5.

Its subcellular location is the peroxisome matrix. It localises to the peroxisome membrane. It carries out the reaction oxalate + ATP + CoA = oxalyl-CoA + AMP + diphosphate. Its function is as follows. Catalyzes the first step in a degradation pathway of oxalate to CO(2) to protect the cell against the harmful effects of oxalate derived from endogenous processes or an environmental sources. This chain is Oxalate--CoA ligase, found in Saccharomyces cerevisiae (strain ATCC 204508 / S288c) (Baker's yeast).